The chain runs to 416 residues: CC-adding tRNA nucleotidyltransferase (416 aa).

CTP is bound at residue 31–34; the sequence is GAVR. Residues Asp46 and Asp48 each contribute to the Mg(2+) site. CTP is bound by residues 106–107, Asn111, 148–157, and Arg188; these read RD and DPLRLLRAYR.

Belongs to the tRNA nucleotidyltransferase/poly(A) polymerase family. The cofactor is Mg(2+).

It carries out the reaction a tRNA precursor + 2 CTP = a tRNA with a 3' CC end + 2 diphosphate. Its function is as follows. tRNA nucleotidyltransferase involved in the synthesis of the tRNA CCA terminus. Adds the two cytidine residues to tRNA. The protein is CC-adding tRNA nucleotidyltransferase of Synechocystis sp. (strain ATCC 27184 / PCC 6803 / Kazusa).